Consider the following 118-residue polypeptide: Ribonuclease P protein component (118 aa).

Belongs to the RnpA family. Consists of a catalytic RNA component (M1 or rnpB) and a protein subunit.

It catalyses the reaction Endonucleolytic cleavage of RNA, removing 5'-extranucleotides from tRNA precursor.. RNaseP catalyzes the removal of the 5'-leader sequence from pre-tRNA to produce the mature 5'-terminus. It can also cleave other RNA substrates such as 4.5S RNA. The protein component plays an auxiliary but essential role in vivo by binding to the 5'-leader sequence and broadening the substrate specificity of the ribozyme. This Vibrio parahaemolyticus serotype O3:K6 (strain RIMD 2210633) protein is Ribonuclease P protein component.